Reading from the N-terminus, the 51-residue chain is Small ribosomal subunit protein eS31 (51 aa).

Residues C22, C25, C40, and C43 each coordinate Zn(2+). Residues C22–C43 form a C4-type zinc finger.

It belongs to the eukaryotic ribosomal protein eS31 family. In terms of assembly, part of the 30S ribosomal subunit. Zn(2+) serves as cofactor.

The polypeptide is Small ribosomal subunit protein eS31 (Pyrococcus abyssi (strain GE5 / Orsay)).